The following is a 380-amino-acid chain: Cytochrome b (380 aa).

4 helical membrane passes run 34 to 54 (FGSL…LLAM), 78 to 99 (WLIR…YLHI), 114 to 134 (WNTG…GYVL), and 179 to 199 (FFAL…IHLT). Positions 84 and 98 each coordinate heme b. Residues histidine 183 and histidine 197 each coordinate heme b. Histidine 202 lines the a ubiquinone pocket. Transmembrane regions (helical) follow at residues 227-247 (LKDI…ALFS), 289-309 (LGGV…PFLH), 321-341 (ISQL…WVGS), and 348-368 (FIII…VLFP).

The protein belongs to the cytochrome b family. In terms of assembly, the cytochrome bc1 complex contains 11 subunits: 3 respiratory subunits (MT-CYB, CYC1 and UQCRFS1), 2 core proteins (UQCRC1 and UQCRC2) and 6 low-molecular weight proteins (UQCRH/QCR6, UQCRB/QCR7, UQCRQ/QCR8, UQCR10/QCR9, UQCR11/QCR10 and a cleavage product of UQCRFS1). This cytochrome bc1 complex then forms a dimer. It depends on heme b as a cofactor.

It is found in the mitochondrion inner membrane. Its function is as follows. Component of the ubiquinol-cytochrome c reductase complex (complex III or cytochrome b-c1 complex) that is part of the mitochondrial respiratory chain. The b-c1 complex mediates electron transfer from ubiquinol to cytochrome c. Contributes to the generation of a proton gradient across the mitochondrial membrane that is then used for ATP synthesis. This chain is Cytochrome b (MT-CYB), found in Pelecanoides georgicus (South Georgia diving petrel).